The primary structure comprises 581 residues: Arginine--tRNA ligase (581 aa).

The 'HIGH' region signature appears at 126 to 136; that stretch reads PNLAKEMHVGH.

It belongs to the class-I aminoacyl-tRNA synthetase family. In terms of assembly, monomer.

It is found in the cytoplasm. The catalysed reaction is tRNA(Arg) + L-arginine + ATP = L-arginyl-tRNA(Arg) + AMP + diphosphate. In Shewanella frigidimarina (strain NCIMB 400), this protein is Arginine--tRNA ligase.